The primary structure comprises 441 residues: Serine--tRNA ligase (441 aa).

An L-serine-binding site is contributed by 250-252; it reads TSE. ATP contacts are provided by residues 281-283 and V297; that span reads RRE. Residue E304 participates in L-serine binding. Residue 368 to 371 coordinates ATP; that stretch reads EIVS. T402 lines the L-serine pocket.

Belongs to the class-II aminoacyl-tRNA synthetase family. Type-1 seryl-tRNA synthetase subfamily. Homodimer. The tRNA molecule binds across the dimer.

The protein resides in the cytoplasm. It carries out the reaction tRNA(Ser) + L-serine + ATP = L-seryl-tRNA(Ser) + AMP + diphosphate + H(+). The catalysed reaction is tRNA(Sec) + L-serine + ATP = L-seryl-tRNA(Sec) + AMP + diphosphate + H(+). It participates in aminoacyl-tRNA biosynthesis; selenocysteinyl-tRNA(Sec) biosynthesis; L-seryl-tRNA(Sec) from L-serine and tRNA(Sec): step 1/1. In terms of biological role, catalyzes the attachment of serine to tRNA(Ser). Is also able to aminoacylate tRNA(Sec) with serine, to form the misacylated tRNA L-seryl-tRNA(Sec), which will be further converted into selenocysteinyl-tRNA(Sec). The chain is Serine--tRNA ligase from Thermoplasma acidophilum (strain ATCC 25905 / DSM 1728 / JCM 9062 / NBRC 15155 / AMRC-C165).